The primary structure comprises 131 residues: Transcription antitermination protein NusB (131 aa).

It belongs to the NusB family.

Involved in transcription antitermination. Required for transcription of ribosomal RNA (rRNA) genes. Binds specifically to the boxA antiterminator sequence of the ribosomal RNA (rrn) operons. The protein is Transcription antitermination protein NusB of Aliarcobacter butzleri (strain RM4018) (Arcobacter butzleri).